The primary structure comprises 838 residues: Periplasmic nitrate reductase (838 aa).

Residues 1–29 (MKVSRRAFIKQTAAAATASVAGVTLPAGA) constitute a signal peptide (tat-type signal). In terms of domain architecture, 4Fe-4S Mo/W bis-MGD-type spans 41 to 97 (LKWSKAPCRFCGTGCGVEVAVKDNRVVATQGDPKAEVNRGLNCVKGYFLSKIMYGKD). Residues Cys48, Cys51, Cys55, and Cys83 each coordinate [4Fe-4S] cluster. Residues Lys85, Gln152, Asn177, Cys181, 214–221 (WGSNMAEM), 245–249 (STFTH), Met382, Gln386, Asn492, 518–519 (SD), Lys541, Asp568, and 728–737 (TGRVLEHWHS) each bind Mo-bis(molybdopterin guanine dinucleotide). Trp804 contributes to the substrate binding site. Mo-bis(molybdopterin guanine dinucleotide) is bound by residues Asn812 and Lys829.

This sequence belongs to the prokaryotic molybdopterin-containing oxidoreductase family. NasA/NapA/NarB subfamily. Component of the periplasmic nitrate reductase NapAB complex composed of NapA and NapB. The cofactor is [4Fe-4S] cluster. It depends on Mo-bis(molybdopterin guanine dinucleotide) as a cofactor. Predicted to be exported by the Tat system. The position of the signal peptide cleavage has not been experimentally proven.

It localises to the periplasm. The catalysed reaction is 2 Fe(II)-[cytochrome] + nitrate + 2 H(+) = 2 Fe(III)-[cytochrome] + nitrite + H2O. Functionally, catalytic subunit of the periplasmic nitrate reductase complex NapAB. Receives electrons from NapB and catalyzes the reduction of nitrate to nitrite. This chain is Periplasmic nitrate reductase, found in Ralstonia pickettii (strain 12J).